The chain runs to 325 residues: MKVNLDRTSSGFCIGVQGTIHLAEEKLREHDGKLYCLGDIVHNEVEVKRLEELGLITIDLNEYSALTNAPVLIRAHGEPPSTYTTAKSNQLDVTDSTCPVVAKLQRSARMLHNRGYQIIIYGKKNHPEVIGINGQCDNQAIIIKHPDLSAPEETAPLDFTRRTALISQTTMDVPGFAMLKENLERLFSASAGPGERHAASHWQDIRDIDLTAEITGVRPLPKFLYKDTICRQVSSRNSKLHDFAAQNDVVIFVAGKKSSNGQVLFNICKASNPRTYFAEDEKDIQDEWLLENRQPVQSAGVCGATSTPMWLLEKVARSIESRFSS.

Cysteine 13 is a [4Fe-4S] cluster binding site. Residues histidine 42 and histidine 76 each coordinate (2E)-4-hydroxy-3-methylbut-2-enyl diphosphate. Dimethylallyl diphosphate contacts are provided by histidine 42 and histidine 76. Isopentenyl diphosphate contacts are provided by histidine 42 and histidine 76. Residue cysteine 98 participates in [4Fe-4S] cluster binding. Position 126 (histidine 126) interacts with (2E)-4-hydroxy-3-methylbut-2-enyl diphosphate. Histidine 126 is a dimethylallyl diphosphate binding site. Histidine 126 provides a ligand contact to isopentenyl diphosphate. Catalysis depends on glutamate 128, which acts as the Proton donor. Threonine 169 lines the (2E)-4-hydroxy-3-methylbut-2-enyl diphosphate pocket. Cysteine 230 contacts [4Fe-4S] cluster. Residues serine 258, serine 259, asparagine 260, and serine 306 each coordinate (2E)-4-hydroxy-3-methylbut-2-enyl diphosphate. 4 residues coordinate dimethylallyl diphosphate: serine 258, serine 259, asparagine 260, and serine 306. Residues serine 258, serine 259, asparagine 260, and serine 306 each coordinate isopentenyl diphosphate.

This sequence belongs to the IspH family. [4Fe-4S] cluster serves as cofactor.

The enzyme catalyses isopentenyl diphosphate + 2 oxidized [2Fe-2S]-[ferredoxin] + H2O = (2E)-4-hydroxy-3-methylbut-2-enyl diphosphate + 2 reduced [2Fe-2S]-[ferredoxin] + 2 H(+). It carries out the reaction dimethylallyl diphosphate + 2 oxidized [2Fe-2S]-[ferredoxin] + H2O = (2E)-4-hydroxy-3-methylbut-2-enyl diphosphate + 2 reduced [2Fe-2S]-[ferredoxin] + 2 H(+). The protein operates within isoprenoid biosynthesis; dimethylallyl diphosphate biosynthesis; dimethylallyl diphosphate from (2E)-4-hydroxy-3-methylbutenyl diphosphate: step 1/1. Its pathway is isoprenoid biosynthesis; isopentenyl diphosphate biosynthesis via DXP pathway; isopentenyl diphosphate from 1-deoxy-D-xylulose 5-phosphate: step 6/6. Its function is as follows. Catalyzes the conversion of 1-hydroxy-2-methyl-2-(E)-butenyl 4-diphosphate (HMBPP) into a mixture of isopentenyl diphosphate (IPP) and dimethylallyl diphosphate (DMAPP). Acts in the terminal step of the DOXP/MEP pathway for isoprenoid precursor biosynthesis. In Prosthecochloris aestuarii (strain DSM 271 / SK 413), this protein is 4-hydroxy-3-methylbut-2-enyl diphosphate reductase.